Consider the following 1129-residue polypeptide: Phytochrome A (1129 aa).

Residues 217 to 399 form the GAF domain; sequence SMERLCDTMV…VFAIHVSKEL (183 aa). Cys-322 serves as a coordination point for phytochromobilin. PAS domains are found at residues 622 to 692 and 755 to 826; these read VTSE…LQGK and DYKA…VNLG. A Histidine kinase domain is found at 906–1123; the sequence is YLRRQAKNPL…TFIITVELAA (218 aa).

Belongs to the phytochrome family. As to quaternary structure, homodimer. Contains one covalently linked phytochromobilin chromophore.

Regulatory photoreceptor which exists in two forms that are reversibly interconvertible by light: the Pr form that absorbs maximally in the red region of the spectrum and the Pfr form that absorbs maximally in the far-red region. Photoconversion of Pr to Pfr induces an array of morphogenic responses, whereas reconversion of Pfr to Pr cancels the induction of those responses. Pfr controls the expression of a number of nuclear genes including those encoding the small subunit of ribulose-bisphosphate carboxylase, chlorophyll A/B binding protein, protochlorophyllide reductase, rRNA, etc. It also controls the expression of its own gene(s) in a negative feedback fashion. The sequence is that of Phytochrome A (PHYA) from Petroselinum crispum (Parsley).